A 393-amino-acid chain; its full sequence is BEN domain-containing protein 5 (393 aa).

Positions 169–212 (RVLYEELLRSYQQQQQEMKHIQHELERTRKQLVQQAKKLKDYGS) form a coiled coil. Residues 274–380 (GSGVWVNEEK…EKIMDINKSC (107 aa)) enclose the BEN domain.

Functionally, may act as a transcriptional repressor. In Xenopus laevis (African clawed frog), this protein is BEN domain-containing protein 5 (bend5).